Consider the following 708-residue polypeptide: MKEWRRNILGRELVVQYGKVAKQSSGSALVRFGDTVVLATANISDKAVEGIDFVPLTVEFQERFYAAGKIPGGFIKREGKPSESAILSARLIDRPIRPLFPKKLRNEVQVIVTVLSVDPNVPPDVVGIFAASLALNVSKIPFEGIVAGIRVGYRDGQFIALPSEEDIEKGLMDITVAGTKDAVTMVEGEAKEVTEEDMVKALRFAHSVIKELVDFQEEILSEFNVEKIPVVEPTPPEGLVEAFKDLLNKEELERRILVKVKKEREVALKEYEEQLLNQIAEKLSVTDLEGIKPFVSELYEDAVKKTMRRLIVEKGIRADGRKPTEIRPISCEVGLFPRTHGSALFTRGETQSLGIVTLGAPMDVQIIDTLLEEGVKRFMLHYNFPPFCTGEVKPLRGPSRREIGHGHLAERALKNMLPPEEEFPYTIRVVSEILESNGSSSMATVCSGSLALMDAGVPIKKHVAGIAMGLILEEDAEIILTDIIGMEDHYGDMDFKVAGTRDGITAFQMDCKVSGVSDELLMKALMQAREARMYILDRMYETISAPRPHLSKYAPIIKVTKVDPEKVADVIGPGGRVIKKIIKDFDVKVEIDDETGLVKVVGSSEENVDKAIELIREIAKEIEVGEVLEGKVTRIEPYGLFIEVRPGKIGLLHQSKVGEDMRQFLKKVKVGDTIKVQVINIDDLGRLQFKRVTEGENTQHGKTHSKRN.

The Mg(2+) site is built by D488 and D494. The KH domain maps to 555–615; it reads PIIKVTKVDP…ENVDKAIELI (61 aa). The S1 motif domain maps to 625–692; that stretch reads GEVLEGKVTR…DLGRLQFKRV (68 aa).

This sequence belongs to the polyribonucleotide nucleotidyltransferase family. It depends on Mg(2+) as a cofactor.

It localises to the cytoplasm. It catalyses the reaction RNA(n+1) + phosphate = RNA(n) + a ribonucleoside 5'-diphosphate. Its function is as follows. Involved in mRNA degradation. Catalyzes the phosphorolysis of single-stranded polyribonucleotides processively in the 3'- to 5'-direction. In Thermotoga sp. (strain RQ2), this protein is Polyribonucleotide nucleotidyltransferase.